Reading from the N-terminus, the 278-residue chain is 2-succinyl-6-hydroxy-2,4-cyclohexadiene-1-carboxylate synthase (278 aa).

It belongs to the AB hydrolase superfamily. MenH family. Monomer.

The catalysed reaction is 5-enolpyruvoyl-6-hydroxy-2-succinyl-cyclohex-3-ene-1-carboxylate = (1R,6R)-6-hydroxy-2-succinyl-cyclohexa-2,4-diene-1-carboxylate + pyruvate. It participates in quinol/quinone metabolism; 1,4-dihydroxy-2-naphthoate biosynthesis; 1,4-dihydroxy-2-naphthoate from chorismate: step 3/7. Its pathway is quinol/quinone metabolism; menaquinone biosynthesis. In terms of biological role, catalyzes a proton abstraction reaction that results in 2,5-elimination of pyruvate from 2-succinyl-5-enolpyruvyl-6-hydroxy-3-cyclohexene-1-carboxylate (SEPHCHC) and the formation of 2-succinyl-6-hydroxy-2,4-cyclohexadiene-1-carboxylate (SHCHC). The chain is 2-succinyl-6-hydroxy-2,4-cyclohexadiene-1-carboxylate synthase from Photorhabdus laumondii subsp. laumondii (strain DSM 15139 / CIP 105565 / TT01) (Photorhabdus luminescens subsp. laumondii).